Here is a 208-residue protein sequence, read N- to C-terminus: MELSLLNIKGKDTGKKVVLSDDIFAVEPNNHAIYLDVKQYLAHQRQGTHKAKERAEVSFSTKKLKKQKGTGGARAGSRKSPIFVGGGTIFGPRPRTYGFKVNKKVKDLARKSAFSHKLKESNVTVLENFTLNAPKTKDYLAILKDLSLDTKKTLFVIADIDKNIILSSRNLKKAKVVSVDQINTYDLVNADKVVISEGSVSKIEALLN.

Positions 51 to 79 (AKERAEVSFSTKKLKKQKGTGGARAGSRK) are disordered.

It belongs to the universal ribosomal protein uL4 family. In terms of assembly, part of the 50S ribosomal subunit.

Its function is as follows. One of the primary rRNA binding proteins, this protein initially binds near the 5'-end of the 23S rRNA. It is important during the early stages of 50S assembly. It makes multiple contacts with different domains of the 23S rRNA in the assembled 50S subunit and ribosome. Functionally, forms part of the polypeptide exit tunnel. The protein is Large ribosomal subunit protein uL4 of Cytophaga hutchinsonii (strain ATCC 33406 / DSM 1761 / CIP 103989 / NBRC 15051 / NCIMB 9469 / D465).